The primary structure comprises 420 residues: MDVENGEGQVQVHLKTKQEHYAVPDVPYAIDGTVTTVELNTFVNALLRQKDGSSDTDFDFLVFDEYLRGRLCDHLREKAISFEDAIEIEYVERFPAPEPQDCLLHDDWVSAVKASGKWILSGCYDNTLNLWTNKGKHILTISGHTAPIKAVDWISLDEETGRFVSTSQDQTAMLWQWNVGSNSVECVSVCKGHERGVDSVSVSPDGLRFATGSWDTMLKVWSAEVEDAVEGSSKRMKESGVRTPKITLQGHRESVSAVQWMDASTLLTGSWDHTLKVWDLSLEGIKTEISTNKSIFDASYSKLNRLILTASADKNLRLYDPRTNQGSVVRNTYLGHNAWVQTVMWSTTEEFLFVSGAYDNQNKLWDCRSPKAPLYDLLGHGEKVLDIDWSNPKYIVSGGVDNTVRVFKSRKALADDAETK.

The ubiquitin-like (UBL) domain stretch occupies residues 10 to 92; it reads VQVHLKTKQE…EDAIEIEYVE (83 aa). WD repeat units lie at residues 104–142, 143–185, 192–231, 250–288, 290–329, 335–375, and 379–417; these read LHDD…LTIS, GHTA…NSVE, GHER…AVEG, GHRE…IKTE, STNK…GSVV, GHNA…APLY, and GHGE…ADDA.

This sequence belongs to the WD repeat WDR12/YTM1 family.

It is found in the nucleus. The protein localises to the nucleolus. It localises to the nucleoplasm. Functionally, required for maturation of ribosomal RNAs and formation of the large ribosomal subunit. The protein is Ribosome biogenesis protein WDR12 homolog of Drosophila yakuba (Fruit fly).